Here is a 246-residue protein sequence, read N- to C-terminus: Alpha-tubulin N-acetyltransferase (246 aa).

Residues 21-202 (LTLVPDGVSR…NNFVVFHSFF (182 aa)) enclose the N-acetyltransferase domain. Acetyl-CoA contacts are provided by residues 135-148 (FYVDESCQRQGYGK) and 172-181 (SNKLLGFLRK).

It belongs to the acetyltransferase ATAT1 family.

It catalyses the reaction L-lysyl-[alpha-tubulin] + acetyl-CoA = N(6)-acetyl-L-lysyl-[alpha-tubulin] + CoA + H(+). Its function is as follows. Specifically acetylates 'Lys-40' in alpha-tubulin on the lumenal side of microtubules. Promotes microtubule destabilization and accelerates microtubule dynamics; this activity may be independent of acetylation activity. Acetylates alpha-tubulin with a slow enzymatic rate, due to a catalytic site that is not optimized for acetyl transfer. Enters the microtubule through each end and diffuses quickly throughout the lumen of microtubules. Acetylates only long/old microtubules because of its slow acetylation rate since it does not have time to act on dynamically unstable microtubules before the enzyme is released. This chain is Alpha-tubulin N-acetyltransferase, found in Leishmania infantum.